The following is a 74-amino-acid chain: Protein kish-B (74 aa).

A signal peptide spans 1 to 22 (MTNVYSLDGLLVFALLFVCTCA). Over 23–52 (YFRKVPRLRSWLLSEKKGVWGVFYKAAVIG) the chain is Extracellular. Residues 53 to 73 (SRLHLAVSISCIAMAFYVLFI) form a helical membrane-spanning segment. A topological domain (cytoplasmic) is located at residue K74.

Belongs to the KISH family.

The protein resides in the golgi apparatus membrane. Functionally, involved in the early part of the secretory pathway. The polypeptide is Protein kish-B (tmem167b) (Xenopus laevis (African clawed frog)).